Reading from the N-terminus, the 225-residue chain is NAD(P)H-quinone oxidoreductase subunit K, chloroplastic (225 aa).

Residues C43, C44, C108, and C139 each coordinate [4Fe-4S] cluster.

This sequence belongs to the complex I 20 kDa subunit family. NDH is composed of at least 16 different subunits, 5 of which are encoded in the nucleus. It depends on [4Fe-4S] cluster as a cofactor.

Its subcellular location is the plastid. The protein localises to the chloroplast thylakoid membrane. The enzyme catalyses a plastoquinone + NADH + (n+1) H(+)(in) = a plastoquinol + NAD(+) + n H(+)(out). It carries out the reaction a plastoquinone + NADPH + (n+1) H(+)(in) = a plastoquinol + NADP(+) + n H(+)(out). Its function is as follows. NDH shuttles electrons from NAD(P)H:plastoquinone, via FMN and iron-sulfur (Fe-S) centers, to quinones in the photosynthetic chain and possibly in a chloroplast respiratory chain. The immediate electron acceptor for the enzyme in this species is believed to be plastoquinone. Couples the redox reaction to proton translocation, and thus conserves the redox energy in a proton gradient. The polypeptide is NAD(P)H-quinone oxidoreductase subunit K, chloroplastic (Platanus occidentalis (Sycamore)).